We begin with the raw amino-acid sequence, 488 residues long: NADH-quinone oxidoreductase subunit N (488 aa).

14 consecutive transmembrane segments (helical) span residues 15–35 (LALP…VDLY), 42–62 (GMTF…AIVA), 79–99 (NLAA…FAYC), 108–128 (LLKG…MIMA), 133–153 (LMTV…MVAF), 168–188 (FVLG…IYGA), 209–229 (WLLL…FGAV), 243–263 (PTTV…ALFV), 277–297 (WQPM…LAAL), 305–325 (MLAY…IAGT), 333–353 (LFYA…IILL), 376–396 (MALM…TVGF), 409–429 (VGLV…AFYY), and 456–476 (GLLV…DSLI).

It belongs to the complex I subunit 2 family. In terms of assembly, NDH-1 is composed of 14 different subunits. Subunits NuoA, H, J, K, L, M, N constitute the membrane sector of the complex.

The protein resides in the cell inner membrane. The catalysed reaction is a quinone + NADH + 5 H(+)(in) = a quinol + NAD(+) + 4 H(+)(out). Functionally, NDH-1 shuttles electrons from NADH, via FMN and iron-sulfur (Fe-S) centers, to quinones in the respiratory chain. The immediate electron acceptor for the enzyme in this species is believed to be ubiquinone. Couples the redox reaction to proton translocation (for every two electrons transferred, four hydrogen ions are translocated across the cytoplasmic membrane), and thus conserves the redox energy in a proton gradient. In Alkalilimnicola ehrlichii (strain ATCC BAA-1101 / DSM 17681 / MLHE-1), this protein is NADH-quinone oxidoreductase subunit N.